A 312-amino-acid chain; its full sequence is Ribosomal RNA small subunit methyltransferase H (312 aa).

Residues 36–38 (GGH), Asp55, Phe81, Asp103, and Gln110 contribute to the S-adenosyl-L-methionine site.

The protein belongs to the methyltransferase superfamily. RsmH family.

It localises to the cytoplasm. The enzyme catalyses cytidine(1402) in 16S rRNA + S-adenosyl-L-methionine = N(4)-methylcytidine(1402) in 16S rRNA + S-adenosyl-L-homocysteine + H(+). In terms of biological role, specifically methylates the N4 position of cytidine in position 1402 (C1402) of 16S rRNA. In Marinomonas sp. (strain MWYL1), this protein is Ribosomal RNA small subunit methyltransferase H.